A 636-amino-acid chain; its full sequence is Fructose-1,6-bisphosphatase class 3 (636 aa).

Belongs to the FBPase class 3 family. Mn(2+) serves as cofactor.

The catalysed reaction is beta-D-fructose 1,6-bisphosphate + H2O = beta-D-fructose 6-phosphate + phosphate. It participates in carbohydrate biosynthesis; gluconeogenesis. The polypeptide is Fructose-1,6-bisphosphatase class 3 (Streptococcus gordonii (strain Challis / ATCC 35105 / BCRC 15272 / CH1 / DL1 / V288)).